Consider the following 190-residue polypeptide: NADH-ubiquinone oxidoreductase 75 kDa subunit, mitochondrial (190 aa).

It belongs to the complex I 75 kDa subunit family. Core subunit of respiratory chain NADH dehydrogenase (Complex I) which is composed of 45 different subunits. This is the largest subunit of complex I and it is a component of the iron-sulfur (IP) fragment of the enzyme. Complex I associates with ubiquinol-cytochrome reductase complex (Complex III) to form supercomplexes. Interacts with MDM2 and AKAP1. [2Fe-2S] cluster serves as cofactor. Requires [4Fe-4S] cluster as cofactor.

It is found in the mitochondrion inner membrane. It catalyses the reaction a ubiquinone + NADH + 5 H(+)(in) = a ubiquinol + NAD(+) + 4 H(+)(out). Functionally, core subunit of the mitochondrial membrane respiratory chain NADH dehydrogenase (Complex I) which catalyzes electron transfer from NADH through the respiratory chain, using ubiquinone as an electron acceptor. Essential for catalysing the entry and efficient transfer of electrons within complex I. Plays a key role in the assembly and stability of complex I and participates in the association of complex I with ubiquinol-cytochrome reductase complex (Complex III) to form supercomplexes. This chain is NADH-ubiquinone oxidoreductase 75 kDa subunit, mitochondrial, found in Mesocricetus auratus (Golden hamster).